A 197-amino-acid polypeptide reads, in one-letter code: Small ribosomal subunit protein uS4c (197 aa).

Residues 82–143 (MRLDNILFRL…KQRSKALIQN (62 aa)) enclose the S4 RNA-binding domain.

Belongs to the universal ribosomal protein uS4 family. Part of the 30S ribosomal subunit. Contacts protein S5. The interaction surface between S4 and S5 is involved in control of translational fidelity.

The protein resides in the plastid. It localises to the chloroplast. One of the primary rRNA binding proteins, it binds directly to 16S rRNA where it nucleates assembly of the body of the 30S subunit. In terms of biological role, with S5 and S12 plays an important role in translational accuracy. This is Small ribosomal subunit protein uS4c (rps4) from Gladiolus papilio (Goldblotch gladiolus).